Here is a 517-residue protein sequence, read N- to C-terminus: Retinal dehydrogenase 2 (517 aa).

NAD(+) contacts are provided by residues 184–186 (IPW), 210–213 (KPAE), and 264–266 (STE). The active-site Proton acceptor is Glu286. Cys320 functions as the Nucleophile in the catalytic mechanism. NAD(+) contacts are provided by residues 366 to 370 (KQYNK) and Glu417.

The protein belongs to the aldehyde dehydrogenase family. Homotetramer. As to expression, expressed in the high vocal center (HVC) which integrates auditory and motor activities and constitutes a nodal nucleus on the song system.

It localises to the cytoplasm. The catalysed reaction is retinal + NAD(+) + H2O = retinoate + NADH + 2 H(+). The enzyme catalyses all-trans-retinal + NAD(+) + H2O = all-trans-retinoate + NADH + 2 H(+). It catalyses the reaction all-trans-13,14-dihydroretinal + NAD(+) + H2O = all-trans-13,14-dihydroretinoate + NADH + 2 H(+). Its pathway is cofactor metabolism; retinol metabolism. Functionally, catalyzes the NAD-dependent oxidation of aldehyde substrates, such as all-trans-retinal and all-trans-13,14-dihydroretinal, to their corresponding carboxylic acids, all-trans-retinoate and all-trans-13,14-dihydroretinoate, respectively. Retinoate signaling is critical for the transcriptional control of many genes, for instance it is crucial for initiation of meiosis in both male and female. Recognizes retinal as substrate, both in its free form and when bound to cellular retinol-binding protein. Lacks activity with benzaldehyde, acetaldehyde and octanal. Displays complete lack of activity with citral. Plays a significant role in the acquisition and production of learned songs. This is Retinal dehydrogenase 2 (ALDH1A2) from Taeniopygia guttata (Zebra finch).